Reading from the N-terminus, the 141-residue chain is MAKKVEGYIKLQIPAGKATPAPPVGPALGQHGVNIVEFTKQFNAKTADQGDLIIPVVITVYADRSFSFITKTPPAPVLIKKACKIQSGSGEPNKKKVAKITKAQVQEIAELKMPDLNAASLESAMSMIAGTARSMGVEVTE.

Belongs to the universal ribosomal protein uL11 family. As to quaternary structure, part of the ribosomal stalk of the 50S ribosomal subunit. Interacts with L10 and the large rRNA to form the base of the stalk. L10 forms an elongated spine to which L12 dimers bind in a sequential fashion forming a multimeric L10(L12)X complex. In terms of processing, one or more lysine residues are methylated.

Forms part of the ribosomal stalk which helps the ribosome interact with GTP-bound translation factors. This chain is Large ribosomal subunit protein uL11, found in Agathobacter rectalis (strain ATCC 33656 / DSM 3377 / JCM 17463 / KCTC 5835 / VPI 0990) (Eubacterium rectale).